Here is a 136-residue protein sequence, read N- to C-terminus: Glutamate-rich protein 4 (136 aa).

Positions 92 to 136 (EEEEEEEQEEKSCVEENKGPEEKQDEERSRSSYPAQRLPDFGMTI) are disordered. A compositionally biased stretch (basic and acidic residues) spans 101 to 121 (EKSCVEENKGPEEKQDEERSR).

The chain is Glutamate-rich protein 4 (Erich4) from Mus musculus (Mouse).